Here is a 1127-residue protein sequence, read N- to C-terminus: MPAIKKNMRYGHPEGHTDVCFDDSGNFLVTCGSDGDIRIWESLDDDDPKSISIGEKAYSFALKNGKVVTAASNNAIQLHTFPDGEPDGILTRFTTNANHVVFNTDGTRIAAGSGDFLVKVLQVEDSTQQKTLRGHSAPVLSVSFDPKDIYLASASCDGSVRIWKISDQTCEAVLPLLEKCNDVFNAKSICRLAWQPKSGKFVAIPVGKAVHLYDRDSLKNICTLSDDFITQPVNIVAWSPCGQYLVAGSVDGCIVAWNIATKACLERIKHEKGYTICALAWHPHLPQIAYTDNEGNLGLLEDVCQGDVKQPSAKVSSAETKDYDELFDGDDDEDFLNGDMIGHEGAVNDEDDDDNFTALTGRPRNRGAIFDDDISSDVPSLKLVGNENPVVEDDQASSVQNFTSVASVKLSYNGPMPTPQQKPFQSGSTPVHLMHRFMVWNSVGVIRCYNDEQDNAIDVEFHDTSIHHAIHLTNSLNHTLADVSQEAVLLACETTEELASKLQCLHFSSWDTSKEWMVDMPKGENIQAICLGQGWVACATSALLIRIFSVGGVQKELISLFGPVVCMASHGEQLIVVYHRGMGFDGDQCLGVQLLELGKKKKQVLHGDPLPLSRKSYLSWLGFTAEGSPCYVDSEGIVRLLNRSLGDTWVPICNTREHCKGKSDHYWVVGIHENPQQVRCIPCKGSRFPPTLPRPAVAVLPFNLPYCQITTEKGQMEEQYWRSQIFSNHSDYLSKHGYECDENFKAEAQKMQQELLMKMFALSCKLEREFRCMELAEFMTQNVMNLAIKYASRSKRLILAQRLSEMALEKAAEQASAEQNEEEDEEEEDFRSRLTAGYSRTATEWGDSRAKPVKQDQYEENNEEEMEEEEKEQEEALESNTPTANPFNKSVKTPDVSESKLGAILSSNQGRVNPFKVSASQKSPAFASNSSRSTSILDNMGKFPRKPSASGSPSTSKSDSVIIKPLAPKAKSKQGQATLFHSVQAKPIAKKTTEEKKAVPTPPKAAADIAENKKPKTGFQLWLDENRPSILSENAGLDESEIIKEGMSRFRMLTSEERMLWTEKAKGDYPGEDGADAKKRKRPEQENMASNGCPQENTDSGIAAAKKHKPLGQSANNKLSAFAFKKE.

WD repeat units follow at residues 11 to 50 (GHPEGHTDVCFDDSGNFLVTCGSDGDIRIWESLDDDDPKS), 52 to 91 (SIGEKAYSFALKNGKVVTAASNNAIQLHTFPDGEPDGILT), 92 to 131 (RFTTNANHVVFNTDGTRIAAGSGDFLVKVLQVEDSTQQKT), 134 to 173 (GHSAPVLSVSFDPKDIYLASASCDGSVRIWKISDQTCEAV), 184 to 223 (FNAKSICRLAWQPKSGKFVAIPVGKAVHLYDRDSLKNICT), 228 to 267 (FITQPVNIVAWSPCGQYLVAGSVDGCIVAWNIATKACLER), and 271 to 310 (EKGYTICALAWHPHLPQIAYTDNEGNLGLLEDVCQGDVKQ). Disordered regions lie at residues 811 to 1013 (AAEQ…AENK) and 1064 to 1127 (KAKG…FKKE). Residues 819–829 (QNEEEDEEEED) show a composition bias toward acidic residues. The segment covering 846 to 857 (GDSRAKPVKQDQ) has biased composition (basic and acidic residues). The span at 858–877 (YEENNEEEMEEEEKEQEEAL) shows a compositional bias: acidic residues. 2 stretches are compositionally biased toward polar residues: residues 881–891 (TPTANPFNKSV) and 918–937 (SASQKSPAFASNSSRSTSIL). Residues 948–960 (SASGSPSTSKSDS) show a composition bias toward low complexity. The HMG box DNA-binding region spans 1013 to 1076 (KKPKTGFQLW…GDYPGEDGAD (64 aa)). The segment covering 1087 to 1100 (NMASNGCPQENTDS) has biased composition (polar residues).

As to quaternary structure, homodimer. In terms of tissue distribution, found in oocytes and in various other cells.

It localises to the nucleus. The protein resides in the nucleoplasm. The protein localises to the cytoplasm. In terms of biological role, core replisome component that acts as a replication initiation factor. Binds directly to the CMG complex and functions as a hub to recruit additional proteins to the replication fork. In Xenopus laevis (African clawed frog), this protein is WD repeat and HMG-box DNA-binding protein 1 (wdhd1).